We begin with the raw amino-acid sequence, 332 residues long: Biotin synthase (332 aa).

A Radical SAM core domain is found at 46-275; that stretch reads YYGKKVKLNM…SKEIRISGGR (230 aa). 3 residues coordinate [4Fe-4S] cluster: C64, C68, and C71. [2Fe-2S] cluster-binding residues include C108, C140, C200, and R270.

It belongs to the radical SAM superfamily. Biotin synthase family. In terms of assembly, homodimer. Requires [4Fe-4S] cluster as cofactor. It depends on [2Fe-2S] cluster as a cofactor.

The enzyme catalyses (4R,5S)-dethiobiotin + (sulfur carrier)-SH + 2 reduced [2Fe-2S]-[ferredoxin] + 2 S-adenosyl-L-methionine = (sulfur carrier)-H + biotin + 2 5'-deoxyadenosine + 2 L-methionine + 2 oxidized [2Fe-2S]-[ferredoxin]. It functions in the pathway cofactor biosynthesis; biotin biosynthesis; biotin from 7,8-diaminononanoate: step 2/2. In terms of biological role, catalyzes the conversion of dethiobiotin (DTB) to biotin by the insertion of a sulfur atom into dethiobiotin via a radical-based mechanism. The chain is Biotin synthase from Lysinibacillus sphaericus (Bacillus sphaericus).